A 537-amino-acid polypeptide reads, in one-letter code: Cytochrome c oxidase subunit 1 (537 aa).

The helical transmembrane segment at 22 to 42 (ILYLLFGLVSGIIGSVFSFII) threads the bilayer. Ca(2+) is bound by residues glutamate 45, alanine 48, and glycine 50. Residue histidine 68 coordinates Fe(II)-heme a. 8 helical membrane-spanning segments follow: residues 70–90 (ILMI…NYLV), 104–124 (VNNF…ISAL), 152–172 (LAIL…VNLI), 190–210 (LFAW…PVLA), 241–261 (LFWF…FGVV), 279–299 (MLWA…HHLF), 318–338 (IAIP…GGAI), and 345–365 (MLYA…GVIL). Histidine 247 contributes to the Cu cation binding site. Positions 247 to 251 (HPEVY) form a cross-link, 1'-histidyl-3'-tyrosine (His-Tyr). Tyrosine 251 lines the O2 pocket. Cu cation contacts are provided by histidine 296 and histidine 297. Residues histidine 375 and aspartate 376 each coordinate Mg(2+). 2 helical membrane-spanning segments follow: residues 379-399 (FVVA…LCGA) and 418-438 (IQFW…HFLG). Histidine 383 serves as a coordination point for heme a3. Position 385 (histidine 385) interacts with Fe(II)-heme a. Proline 447 is a Ca(2+) binding site. Residues 458–478 (FVSSIGSVISILSLFLFMYVM) traverse the membrane as a helical segment.

It belongs to the heme-copper respiratory oxidase family. Component of the cytochrome c oxidase (complex IV, CIV), a multisubunit enzyme composed of a catalytic core of 3 subunits and several supernumerary subunits. The complex exists as a monomer or a dimer and forms supercomplexes (SCs) in the inner mitochondrial membrane with ubiquinol-cytochrome c oxidoreductase (cytochrome b-c1 complex, complex III, CIII). Heme is required as a cofactor. Cu cation serves as cofactor.

It is found in the mitochondrion inner membrane. The catalysed reaction is 4 Fe(II)-[cytochrome c] + O2 + 8 H(+)(in) = 4 Fe(III)-[cytochrome c] + 2 H2O + 4 H(+)(out). It functions in the pathway energy metabolism; oxidative phosphorylation. Its function is as follows. Component of the cytochrome c oxidase, the last enzyme in the mitochondrial electron transport chain which drives oxidative phosphorylation. The respiratory chain contains 3 multisubunit complexes succinate dehydrogenase (complex II, CII), ubiquinol-cytochrome c oxidoreductase (cytochrome b-c1 complex, complex III, CIII) and cytochrome c oxidase (complex IV, CIV), that cooperate to transfer electrons derived from NADH and succinate to molecular oxygen, creating an electrochemical gradient over the inner membrane that drives transmembrane transport and the ATP synthase. Cytochrome c oxidase is the component of the respiratory chain that catalyzes the reduction of oxygen to water. Electrons originating from reduced cytochrome c in the intermembrane space (IMS) are transferred via the dinuclear copper A center (CU(A)) of subunit 2 and heme A of subunit 1 to the active site in subunit 1, a binuclear center (BNC) formed by heme A3 and copper B (CU(B)). The BNC reduces molecular oxygen to 2 water molecules using 4 electrons from cytochrome c in the IMS and 4 protons from the mitochondrial matrix. This Schizosaccharomyces pombe (strain 972 / ATCC 24843) (Fission yeast) protein is Cytochrome c oxidase subunit 1 (cox1).